A 557-amino-acid polypeptide reads, in one-letter code: Urocanate hydratase (557 aa).

The segment at 1–20 (MSNPRHNEREVRSPRGDELN) is disordered. Residues 52–53 (GG), Gln130, 176–178 (GMG), Glu196, Arg201, 242–243 (NA), 263–267 (QTSAH), 273–274 (YL), and Tyr322 contribute to the NAD(+) site. Cys410 is an active-site residue. Gly492 contributes to the NAD(+) binding site.

It belongs to the urocanase family. NAD(+) is required as a cofactor.

Its subcellular location is the cytoplasm. The enzyme catalyses 4-imidazolone-5-propanoate = trans-urocanate + H2O. It functions in the pathway amino-acid degradation; L-histidine degradation into L-glutamate; N-formimidoyl-L-glutamate from L-histidine: step 2/3. Its function is as follows. Catalyzes the conversion of urocanate to 4-imidazolone-5-propionate. This chain is Urocanate hydratase, found in Brucella suis (strain ATCC 23445 / NCTC 10510).